Reading from the N-terminus, the 66-residue chain is COP9 signalosome complex subunit 6a (66 aa).

This sequence belongs to the peptidase M67A family. CSN6 subfamily. In terms of assembly, component of the CSN complex, probably composed of CSN1, CSN2, CSN3, CSN4, CSN5 (CSN5A or CSN5B), CSN6 (CSN6A or CSN6B), CSN7 and CSN8.

It is found in the cytoplasm. The protein localises to the nucleus. Functionally, component of the COP9 signalosome complex (CSN), a complex involved in various cellular and developmental processes such as photomorphogenesis and auxin and jasmonate responses. The CSN complex is an essential regulator of the ubiquitin (Ubl) conjugation pathway by mediating the deneddylation of the cullin subunits of SCF-type E3 ligase complexes, leading to decrease the Ubl ligase activity of SCF. It is involved in repression of photomorphogenesis in darkness by regulating the activity of COP1-containing Ubl ligase complexes. The protein is COP9 signalosome complex subunit 6a (CSN6A) of Brassica oleracea (Wild cabbage).